A 332-amino-acid polypeptide reads, in one-letter code: Malate dehydrogenase, cytoplasmic (332 aa).

Residues 16 to 17 (QI), D43, and G90 each bind NAD(+). Oxaloacetate is bound at residue R99. NAD(+) contacts are provided by Q113 and N132. The oxaloacetate site is built by N132, R163, H188, and S243. The Proton acceptor role is filled by H188.

Belongs to the LDH/MDH superfamily. MDH type 2 family. In terms of assembly, homodimer.

It is found in the cytoplasm. It carries out the reaction (S)-malate + NAD(+) = oxaloacetate + NADH + H(+). The protein is Malate dehydrogenase, cytoplasmic (CMDH) of Medicago sativa (Alfalfa).